A 96-amino-acid chain; its full sequence is Co-chaperonin GroES (96 aa).

The protein belongs to the GroES chaperonin family. As to quaternary structure, heptamer of 7 subunits arranged in a ring. Interacts with the chaperonin GroEL.

Its subcellular location is the cytoplasm. In terms of biological role, together with the chaperonin GroEL, plays an essential role in assisting protein folding. The GroEL-GroES system forms a nano-cage that allows encapsulation of the non-native substrate proteins and provides a physical environment optimized to promote and accelerate protein folding. GroES binds to the apical surface of the GroEL ring, thereby capping the opening of the GroEL channel. This Polynucleobacter necessarius subsp. necessarius (strain STIR1) protein is Co-chaperonin GroES.